Consider the following 380-residue polypeptide: Kappa-type opioid receptor (380 aa).

The Extracellular segment spans residues 1 to 57 (MESPIQIFRGDPGPTCSPSACLLPNSSSWFPNWAESDSNGSVGSEDQQLESAHISPA). N-linked (GlcNAc...) asparagine glycosylation is found at asparagine 25 and asparagine 39. A helical transmembrane segment spans residues 58-85 (IPVIITAVYSVVFVVGLVGNSLVMFVII). Residues 86–95 (RYTKMKTATN) are Cytoplasmic-facing. Residues 96 to 119 (IYIFNLALADALVTTTMPFQSAVY) form a helical membrane-spanning segment. Residues 120-132 (LMNSWPFGDVLCK) are Extracellular-facing. Residues cysteine 131 and cysteine 210 are joined by a disulfide bond. Residues 133–154 (IVISIDYYNMFTSIFTLTMMSV) form a helical membrane-spanning segment. The Cytoplasmic portion of the chain corresponds to 155–173 (DRYIAVCHPVKALDFRTPL). A helical transmembrane segment spans residues 174-196 (KAKIINICIWLLASSVGISAIVL). The Extracellular portion of the chain corresponds to 197 to 222 (GGTKVREDVDVIECSLQFPDDEYSWW). Residues 223–247 (DLFMKICVFVFAFVIPVLIIIVCYT) form a helical membrane-spanning segment. Topologically, residues 248-274 (LMILRLKSVRLLSGSREKDRNLRRITK) are cytoplasmic. A helical transmembrane segment spans residues 275–296 (LVLVVVAVFIICWTPIHIFILV). At 297 to 311 (EALGSTSHSTAALSS) the chain is on the extracellular side. A helical membrane pass occupies residues 312-333 (YYFCIALGYTNSSLNPVLYAFL). The Cytoplasmic segment spans residues 334–380 (DENFKRCFRDFCFPIKMRMERQSTNRVRNTVQDPASMRDVGGMNKPV). Cysteine 345 carries the S-palmitoyl cysteine lipid modification.

Belongs to the G-protein coupled receptor 1 family. In terms of assembly, interacts with NHERF1. Interacts with GABARAPL1. In terms of tissue distribution, detected in brain (at protein level). Brain (neocortex, hippocampus, amygdala, medial habenula, hypothalamus, locus ceruleus, and parabrachial nucleus).

The protein resides in the cell membrane. Its function is as follows. G-protein coupled opioid receptor that functions as a receptor for endogenous alpha-neoendorphins and dynorphins, but has low affinity for beta-endorphins. Also functions as a receptor for various synthetic opioids and for the psychoactive diterpene salvinorin A. Ligand binding causes a conformation change that triggers signaling via guanine nucleotide-binding proteins (G proteins) and modulates the activity of down-stream effectors, such as adenylate cyclase. Signaling leads to the inhibition of adenylate cyclase activity. Inhibits neurotransmitter release by reducing calcium ion currents and increasing potassium ion conductance. Plays a role in the perception of pain. Plays a role in mediating reduced physical activity upon treatment with synthetic opioids. Plays a role in the regulation of salivation in response to synthetic opioids. May play a role in arousal and regulation of autonomic and neuroendocrine functions. The polypeptide is Kappa-type opioid receptor (Oprk1) (Mus musculus (Mouse)).